The following is a 167-amino-acid chain: MGTVNNAIRDSVLFTTADSIINWSRSSALWPETFGIACCAIEMISAGCARYDLDRFGVVFRPSPRQSDVMIIAGTVTRKFAPVVRRLYDQMPEPRWVIAMGTCAISGGVYNTYAVVQGSETFVPVDVHVPGCPPRPEALMHGFLLLQEKIKRSRALAGTPLDRVIAS.

[4Fe-4S] cluster is bound by residues C38, C39, C103, and C132.

The protein belongs to the complex I 20 kDa subunit family. As to quaternary structure, NDH-1 is composed of 14 different subunits. Subunits NuoB, C, D, E, F, and G constitute the peripheral sector of the complex. Requires [4Fe-4S] cluster as cofactor.

The protein resides in the cell inner membrane. It carries out the reaction a quinone + NADH + 5 H(+)(in) = a quinol + NAD(+) + 4 H(+)(out). Functionally, NDH-1 shuttles electrons from NADH, via FMN and iron-sulfur (Fe-S) centers, to quinones in the respiratory chain. The immediate electron acceptor for the enzyme in this species is believed to be ubiquinone. Couples the redox reaction to proton translocation (for every two electrons transferred, four hydrogen ions are translocated across the cytoplasmic membrane), and thus conserves the redox energy in a proton gradient. This is NADH-quinone oxidoreductase subunit B 2 from Rhizobium etli (strain CIAT 652).